Reading from the N-terminus, the 542-residue chain is DM7 family protein GG17591 (542 aa).

The segment covering 415 to 430 (GETQEMDEAHPTKEES) has biased composition (basic and acidic residues). Residues 415 to 443 (GETQEMDEAHPTKEESKSEEEGEVQSGSQ) are disordered.

It belongs to the DM7 family.

The sequence is that of DM7 family protein GG17591 from Drosophila erecta (Fruit fly).